The chain runs to 298 residues: Chromatin modification-related protein YNG2 (298 aa).

The stretch at 20–86 (EVRHLLEEIK…KLVQKLQKEK (67 aa)) forms a coiled coil. A compositionally biased stretch (polar residues) spans 140–158 (GFSDSASATPTPRNGSSAT). Residues 140-206 (GFSDSASATP…EEIEDPLPYE (67 aa)) are disordered. The segment covering 174–188 (VKGASSSSAQSSSAS) has biased composition (low complexity). The PHD-type zinc finger occupies 237–288 (NLYCFCQRVSFGEMIGCDNEDCKYEWFHWSCVGITSPPKDDEIWYCPDCASK). Zn(2+) contacts are provided by C240, C242, C253, C258, H264, C267, C282, and C285.

This sequence belongs to the ING family. In terms of assembly, interacts with H3K4me3 and to a lesser extent with H3K4me2. Component of the NuA4 histone acetyltransferase complex.

It localises to the nucleus. Functionally, component of the NuA4 histone acetyltransferase complex which is involved in transcriptional activation of selected genes principally by acetylation of nucleosomal histone H4 and H2A. The NuA4 complex is also involved in DNA repair. Involved in cell cycle progression and meiosis. In Candida albicans (strain SC5314 / ATCC MYA-2876) (Yeast), this protein is Chromatin modification-related protein YNG2 (YNG2).